Reading from the N-terminus, the 152-residue chain is Protein-export protein SecB (152 aa).

The protein belongs to the SecB family. As to quaternary structure, homotetramer, a dimer of dimers. One homotetramer interacts with 1 SecA dimer.

Its subcellular location is the cytoplasm. Functionally, one of the proteins required for the normal export of preproteins out of the cell cytoplasm. It is a molecular chaperone that binds to a subset of precursor proteins, maintaining them in a translocation-competent state. It also specifically binds to its receptor SecA. In Rickettsia conorii (strain ATCC VR-613 / Malish 7), this protein is Protein-export protein SecB.